Reading from the N-terminus, the 508-residue chain is Pancreatic alpha-amylase 2a5 (508 aa).

An N-terminal signal peptide occupies residues 1-15 (MKFVLLLSLIGFCWA). The residue at position 16 (Gln-16) is a Pyrrolidone carboxylic acid. 3 disulfide bridges follow: Cys-43/Cys-101, Cys-85/Cys-130, and Cys-156/Cys-172. 3 residues coordinate Ca(2+): Asn-115, Arg-170, and Asp-179. Arg-207 contacts chloride. Residue Asp-209 is the Nucleophile of the active site. Residue His-213 coordinates Ca(2+). The active-site Proton donor is the Glu-245. Chloride-binding residues include Asn-310 and Arg-349. Disulfide bonds link Cys-390–Cys-396 and Cys-462–Cys-474.

The protein belongs to the glycosyl hydrolase 13 family. In terms of assembly, monomer. It depends on Ca(2+) as a cofactor. Chloride serves as cofactor.

It is found in the secreted. Its subcellular location is the extracellular space. It catalyses the reaction Endohydrolysis of (1-&gt;4)-alpha-D-glucosidic linkages in polysaccharides containing three or more (1-&gt;4)-alpha-linked D-glucose units.. The polypeptide is Pancreatic alpha-amylase 2a5 (Mus musculus (Mouse)).